Reading from the N-terminus, the 374-residue chain is Chaperone protein DnaJ (374 aa).

Residues 5–70 (DFYEILGVSK…EKRSAYDRMG (66 aa)) form the J domain. The segment at 133–211 (GCKKEISFTA…CHGNGVKDKS (79 aa)) adopts a CR-type zinc-finger fold. Residues C146, C149, C163, C166, C185, C188, C199, and C202 each coordinate Zn(2+). 4 CXXCXGXG motif repeats span residues 146–153 (CDTCDGKG), 163–170 (CQTCHGQG), 185–192 (CPHCGGTG), and 199–206 (CSDCHGNG).

It belongs to the DnaJ family. As to quaternary structure, homodimer. Zn(2+) serves as cofactor.

The protein localises to the cytoplasm. Participates actively in the response to hyperosmotic and heat shock by preventing the aggregation of stress-denatured proteins and by disaggregating proteins, also in an autonomous, DnaK-independent fashion. Unfolded proteins bind initially to DnaJ; upon interaction with the DnaJ-bound protein, DnaK hydrolyzes its bound ATP, resulting in the formation of a stable complex. GrpE releases ADP from DnaK; ATP binding to DnaK triggers the release of the substrate protein, thus completing the reaction cycle. Several rounds of ATP-dependent interactions between DnaJ, DnaK and GrpE are required for fully efficient folding. Also involved, together with DnaK and GrpE, in the DNA replication of plasmids through activation of initiation proteins. The chain is Chaperone protein DnaJ from Psychrobacter arcticus (strain DSM 17307 / VKM B-2377 / 273-4).